A 285-amino-acid polypeptide reads, in one-letter code: Probable endonuclease 4 (285 aa).

Positions 69, 109, 145, 179, 182, 216, 229, 231, and 261 each coordinate Zn(2+).

The protein belongs to the AP endonuclease 2 family. Requires Zn(2+) as cofactor.

It catalyses the reaction Endonucleolytic cleavage to 5'-phosphooligonucleotide end-products.. In terms of biological role, endonuclease IV plays a role in DNA repair. It cleaves phosphodiester bonds at apurinic or apyrimidinic (AP) sites, generating a 3'-hydroxyl group and a 5'-terminal sugar phosphate. In Shigella boydii serotype 4 (strain Sb227), this protein is Probable endonuclease 4.